We begin with the raw amino-acid sequence, 132 residues long: Small ribosomal subunit protein uS11 (132 aa).

This sequence belongs to the universal ribosomal protein uS11 family. As to quaternary structure, part of the 30S ribosomal subunit. Interacts with proteins S7 and S18. Binds to IF-3.

In terms of biological role, located on the platform of the 30S subunit, it bridges several disparate RNA helices of the 16S rRNA. Forms part of the Shine-Dalgarno cleft in the 70S ribosome. The chain is Small ribosomal subunit protein uS11 from Chlamydia abortus (strain DSM 27085 / S26/3) (Chlamydophila abortus).